Here is a 245-residue protein sequence, read N- to C-terminus: Probable phosphatase YcdX (245 aa).

The Zn(2+) site is built by H7, H9, H15, H40, E73, H101, H131, D192, and H194.

Belongs to the PHP family. As to quaternary structure, homotrimer. It depends on Zn(2+) as a cofactor.

The sequence is that of Probable phosphatase YcdX from Salmonella heidelberg (strain SL476).